The following is a 360-amino-acid chain: DNA replication and repair protein RecF (360 aa).

Position 33–40 (33–40 (GENGSGKT)) interacts with ATP.

This sequence belongs to the RecF family.

It is found in the cytoplasm. Its function is as follows. The RecF protein is involved in DNA metabolism; it is required for DNA replication and normal SOS inducibility. RecF binds preferentially to single-stranded, linear DNA. It also seems to bind ATP. The sequence is that of DNA replication and repair protein RecF from Rickettsia rickettsii (strain Iowa).